The primary structure comprises 407 residues: MKKDVKKVVLAYSGGLDTSIILKWLQDEYKCEVVTFTADIGQGEELEPARKKALALGVKPENIFIEDLREEFVRDYVFPMFRANAIYEGEYLLGTSIARPLIAKRQSEIARLVGADGVSHGATGKGNDQVRFELGYYALGDNLTIIAPWREWDLNSREKLLAYAEKNGIDITKKPGKSPYSMDANLLHISYEGLVLEDPSHAPEDDMWRWTVSPKDAPDKSEIIEIGYEKGDPVSIDGKKMSPAEILTELNRLGAKHGIGRLDIVENRSVGMKSRGCYETPGGTIMLKAHRAIESITLDRGAAHLKDEIMPKYAELVYNGYWWSPERNMLQALIDKSQEHVNGSVKVELYKGNVTILGRSSKDDNLFSEAYCTFEEDSVYDQKDAEGFIKLNALRFIIARKNGRKFD.

ATP contacts are provided by residues 11-19 and alanine 38; that span reads AYSGGLDTS. L-citrulline contacts are provided by tyrosine 91 and serine 96. Glycine 121 provides a ligand contact to ATP. Positions 123, 127, and 128 each coordinate L-aspartate. Residue asparagine 127 participates in L-citrulline binding. Arginine 131, serine 181, serine 190, glutamate 266, and tyrosine 278 together coordinate L-citrulline.

This sequence belongs to the argininosuccinate synthase family. Type 1 subfamily. As to quaternary structure, homotetramer.

The protein resides in the cytoplasm. The catalysed reaction is L-citrulline + L-aspartate + ATP = 2-(N(omega)-L-arginino)succinate + AMP + diphosphate + H(+). Its pathway is amino-acid biosynthesis; L-arginine biosynthesis; L-arginine from L-ornithine and carbamoyl phosphate: step 2/3. The sequence is that of Argininosuccinate synthase from Campylobacter concisus (strain 13826).